A 311-amino-acid polypeptide reads, in one-letter code: Pyrimidine-specific ribonucleoside hydrolase RihA (311 aa).

His240 is an active-site residue.

Belongs to the IUNH family. RihA subfamily.

Functionally, hydrolyzes cytidine or uridine to ribose and cytosine or uracil, respectively. This chain is Pyrimidine-specific ribonucleoside hydrolase RihA, found in Salmonella arizonae (strain ATCC BAA-731 / CDC346-86 / RSK2980).